Reading from the N-terminus, the 533-residue chain is Retinoid isomerohydrolase (533 aa).

Ser2 carries the N-acetylserine modification. Phosphothreonine occurs at positions 101 and 105. Cys112 is lipidated: S-palmitoyl cysteine; in membrane form. N6-acetyllysine is present on Lys113. Residue Ser117 is modified to Phosphoserine. His180 lines the Fe cation pocket. Cys231 is lipidated: S-palmitoyl cysteine; in membrane form. Residues His241 and His313 each contribute to the Fe cation site. S-palmitoyl cysteine; in membrane form attachment occurs at residues Cys329 and Cys330. His527 provides a ligand contact to Fe cation.

Belongs to the carotenoid oxygenase family. Interacts with MYO7A; this mediates light-dependent intracellular transport of RPE65. Fe(2+) is required as a cofactor. Post-translationally, palmitoylation by LRAT regulates ligand binding specificity; the palmitoylated form (membrane form) specifically binds all-trans-retinyl-palmitate, while the soluble unpalmitoylated form binds all-trans-retinol (vitamin A). Retinal pigment epithelium specific.

The protein resides in the cytoplasm. It is found in the cell membrane. Its subcellular location is the microsome membrane. It catalyses the reaction an all-trans-retinyl ester + H2O = 11-cis-retinol + a fatty acid + H(+). The enzyme catalyses lutein = (3R,3'S)-zeaxanthin. The catalysed reaction is all-trans-retinyl hexadecanoate + H2O = 11-cis-retinol + hexadecanoate + H(+). Functionally, critical isomerohydrolase in the retinoid cycle involved in regeneration of 11-cis-retinal, the chromophore of rod and cone opsins. Catalyzes the cleavage and isomerization of all-trans-retinyl fatty acid esters to 11-cis-retinol which is further oxidized by 11-cis retinol dehydrogenase to 11-cis-retinal for use as visual chromophore. Essential for the production of 11-cis retinal for both rod and cone photoreceptors. Also capable of catalyzing the isomerization of lutein to meso-zeaxanthin an eye-specific carotenoid. The soluble form binds vitamin A (all-trans-retinol), making it available for LRAT processing to all-trans-retinyl ester. The membrane form, palmitoylated by LRAT, binds all-trans-retinyl esters, making them available for IMH (isomerohydrolase) processing to all-cis-retinol. The soluble form is regenerated by transferring its palmitoyl groups onto 11-cis-retinol, a reaction catalyzed by LRAT. The protein is Retinoid isomerohydrolase (RPE65) of Chlorocebus aethiops (Green monkey).